The following is a 115-amino-acid chain: Large ribosomal subunit protein bL20 (115 aa).

It belongs to the bacterial ribosomal protein bL20 family.

Binds directly to 23S ribosomal RNA and is necessary for the in vitro assembly process of the 50S ribosomal subunit. It is not involved in the protein synthesizing functions of that subunit. The protein is Large ribosomal subunit protein bL20 of Borrelia duttonii (strain Ly).